Consider the following 77-residue polypeptide: Large ribosomal subunit protein eL20 (77 aa).

Belongs to the eukaryotic ribosomal protein eL20 family. Part of the 50S ribosomal subunit. Binds 23S rRNA.

This is Large ribosomal subunit protein eL20 from Thermococcus onnurineus (strain NA1).